The following is a 379-amino-acid chain: Mannitol-1-phosphate 5-dehydrogenase (379 aa).

Residue 3–14 coordinates NAD(+); the sequence is ALHFGAGNIGRG.

This sequence belongs to the mannitol dehydrogenase family.

It carries out the reaction D-mannitol 1-phosphate + NAD(+) = beta-D-fructose 6-phosphate + NADH + H(+). In Actinobacillus pleuropneumoniae serotype 5b (strain L20), this protein is Mannitol-1-phosphate 5-dehydrogenase.